Reading from the N-terminus, the 358-residue chain is Gentisate 1,2-dioxygenase (358 aa).

The Cupin type-2 domain maps to 99 to 165 (QYLGPREVAP…VTDEPMAWLD (67 aa)). The segment at 185-215 (DELSTRETPERSRGERLWGHPGLRPIGRPDQ) is disordered. The segment covering 187–202 (LSTRETPERSRGERLW) has biased composition (basic and acidic residues).

Belongs to the gentisate 1,2-dioxygenase family.

It carries out the reaction 2,5-dihydroxybenzoate + O2 = 3-maleylpyruvate + H(+). Involved in the degradation of salicylate via a pathway involving coenzyme A derivative. Catalyzes the oxygen-dependent ring fission of gentisate between the carboxyl and proximal hydroxyl groups at positions 1 and 2 of the aromatic ring to form maleylpyruvate. The substrate specificity is strong, since salicylate, catechol, protocatechuic acid, homogenetisate, 2,3-dihydroxybenzoate or 5-aminosalicylate cannot substitute for gentisate in the ring cleavage reaction. This chain is Gentisate 1,2-dioxygenase, found in Streptomyces sp.